The primary structure comprises 203 residues: Small ribosomal subunit protein uS4 (203 aa).

The region spanning 92 to 164 (TRLDSVVYLL…LEENRIRNVP (73 aa)) is the S4 RNA-binding domain.

Belongs to the universal ribosomal protein uS4 family. As to quaternary structure, part of the 30S ribosomal subunit. Contacts protein S5. The interaction surface between S4 and S5 is involved in control of translational fidelity.

One of the primary rRNA binding proteins, it binds directly to 16S rRNA where it nucleates assembly of the body of the 30S subunit. In terms of biological role, with S5 and S12 plays an important role in translational accuracy. The chain is Small ribosomal subunit protein uS4 from Opitutus terrae (strain DSM 11246 / JCM 15787 / PB90-1).